Reading from the N-terminus, the 89-residue chain is Large ribosomal subunit protein bL27 (89 aa).

A disordered region spans residues 1 to 21 (MAHKKAGGSSRNGRDSAGRRL).

The protein belongs to the bacterial ribosomal protein bL27 family.

In Erythrobacter litoralis (strain HTCC2594), this protein is Large ribosomal subunit protein bL27.